The primary structure comprises 498 residues: Hexokinase-3 (498 aa).

The chain crosses the membrane as a helical span at residues 4–24; it reads VAVAFAAVAVVAACSVAAVMV. The Hexokinase domain occupies 35 to 494; it reads RTVVEILKEL…SSIGSALLVA (460 aa). A hexokinase small subdomain region spans residues 90–227; that stretch reads TGREKGTYYA…GLDMHVAALV (138 aa). ADP contacts are provided by glycine 104 and threonine 105. Residues threonine 193, lysine 194, asparagine 228, and aspartate 229 each contribute to the D-glucose site. The tract at residues 228 to 483 is hexokinase large subdomain; it reads NDTVGALSLG…QYVVVKAMED (256 aa). Threonine 252 contributes to the ADP binding site. Asparagine 255, glutamate 283, and glutamate 314 together coordinate D-glucose. Glycine 448 is an ADP binding site.

Belongs to the hexokinase family. As to expression, expressed in roots, emerging lateral roots, vascular tissues of cotyledons, roots and leaves, root and shoot meristems, anther filaments and funiculi of mature seeds.

Its subcellular location is the mitochondrion outer membrane. The enzyme catalyses a D-hexose + ATP = a D-hexose 6-phosphate + ADP + H(+). It carries out the reaction D-fructose + ATP = D-fructose 6-phosphate + ADP + H(+). It catalyses the reaction D-glucose + ATP = D-glucose 6-phosphate + ADP + H(+). It participates in carbohydrate metabolism; hexose metabolism. It functions in the pathway carbohydrate degradation; glycolysis; D-glyceraldehyde 3-phosphate and glycerone phosphate from D-glucose: step 1/4. In terms of biological role, fructose and glucose phosphorylating enzyme. May be involved in the phosphorylation of glucose during the export from mitochondrion to cytosol. Plays a role in plant growth and development, perhaps by mediating cross-talk between glucose and hormone response pathways. Involved in root hair cell development by mediating certain aspects of cross talk between glucose and ethylene response pathways. The chain is Hexokinase-3 from Arabidopsis thaliana (Mouse-ear cress).